Reading from the N-terminus, the 333-residue chain is Taste receptor type 2 member 38 (333 aa).

The Extracellular segment spans residues 1-17 (MLTLTRIRTVSYEVRST). Residues 18-38 (FLFISVLEFAVGFLTNAFVFL) form a helical membrane-spanning segment. Topologically, residues 39-55 (VNFWDVVKRQPLSNSDC) are cytoplasmic. A helical membrane pass occupies residues 56-76 (VLLCLSISRLFLHGLLFLSAI). Over 77-94 (QLTHFQKLSEPLNHSYQA) the chain is Extracellular. Residues 95-115 (IIMLWMIANQANLWLAACLSL) form a helical membrane-spanning segment. Residues 116-142 (LYCSKLIRFSHTFLICLASWVSRKISQ) are Cytoplasmic-facing. The helical transmembrane segment at 143 to 163 (MLLGIILCSCICTVLCVWCFF) threads the bilayer. At 164–190 (SRPHFTVTTVLFMNNNTRLNWQIKDLN) the chain is on the extracellular side. A glycan (N-linked (GlcNAc...) asparagine) is linked at N178. Residues 191 to 211 (LFYSFLFCYLWSVPPFLLFLV) form a helical membrane-spanning segment. Over 212 to 251 (SSGMLTVSLGRHMRTMKVYIRDSRDPSLEAHIKALKSLVS) the chain is Cytoplasmic. A helical transmembrane segment spans residues 252 to 272 (FFCFFVISSCAAFISVPLLIL). Residues 273–276 (WRDK) are Extracellular-facing. The chain crosses the membrane as a helical span at residues 277–297 (IGVMVCVGIMAACPSGHAAVL). At 298–333 (ISGNAKLRRAVTTILLWAQSSLKVRADHKADSRTPC) the chain is on the cytoplasmic side.

It belongs to the G-protein coupled receptor T2R family.

It is found in the membrane. Its function is as follows. Receptor that may play a role in the perception of bitterness and is gustducin-linked. May play a role in sensing the chemical composition of the gastrointestinal content. The activity of this receptor may stimulate alpha gustducin, mediate PLC-beta-2 activation and lead to the gating of TRPM5. The sequence is that of Taste receptor type 2 member 38 (TAS2R38) from Gorilla gorilla gorilla (Western lowland gorilla).